Here is a 937-residue protein sequence, read N- to C-terminus: MTDYKETLNLPNTTFPMKANLVQREPEIILWWEENAVYEKMLEASGAKGIFILHDGPPYANGHIHLGTALNKILKDIVIKSRNMQGYRSCYVPGWDCHGLPIELKVEQELGKKKQEMPLSLIRNRCREYAEKFLDIQREEFKRLGVFGSWDHPYQTMDPIYESVITLELARFVEKGSVIRSKKPIYWCYSCETALAEAEVEYADHTSSAIFVRFPIHDKRLHTIFPQADLTTTSIVIWTTTPWTLPSNMAIALNADFDYALLQYKNEYIIIASELVDICLKQFNWEDAKVIKVVQGKDLEGMKARHPLYDQESMIVLGDHVTLEAGTGCVHTAPGHGPEDYEVALRYNLDVYSPLDDQGRYLDTVKFFAGLRVDQANPVVIQKLEEFHRIIQKNTIQHSYPHCWRCKSPVIFRATTQWFISMEKNNLREQSLKAIKKNIEWIPSWGEDRIYNMIASRPDWCISRQRIWGVPIVALICESCGEVWNDPSWMKKIAEFFAIHPRGCDYWYEAKLEDIVPVGLKCPHCEGEQWKRESDILDVWFDSGSSFAAVLEERPNLGFPADLYLEGSDQHRGWFHSSLLISIGTRGVPPYHAVLTHGYVVDGDGRKMSKSMGNVTSPQEIISKFGVEILRLWVSSVDYREDVRISNEILQRLVDAYRRIRNTCRYLLGNINDLTLDELVPVKEMESLDQYILDVVATAYTEIQKSYISYDFHTVFHKLHNLCTTDLSAFYLDILKDRLYTSGVRSHKRKSAQTALFYILHMLLRSMAPILSFTAEEVYKYIPDTLKDDNVISVFMLPFFETSSFLLDDRVRSYWETLLLIRAEVNQAIEPMRKKGEIGHSLDTHITLYVAPELHTLLLELNTDLCSLFIVSQLDIMPLSEASVDAAVSKIDGLAVAVNRAQGNKCQRCWMYKELGSNHQYPTLCPRCTEVVENMKI.

Positions 58 to 68 (PYANGHIHLGT) match the 'HIGH' region motif. Glutamate 566 provides a ligand contact to L-isoleucyl-5'-AMP. The short motif at 607–611 (KMSKS) is the 'KMSKS' region element. ATP is bound at residue lysine 610. Positions 906, 909, 925, and 928 each coordinate Zn(2+).

It belongs to the class-I aminoacyl-tRNA synthetase family. IleS type 1 subfamily. As to quaternary structure, monomer. The cofactor is Zn(2+).

It localises to the cytoplasm. The enzyme catalyses tRNA(Ile) + L-isoleucine + ATP = L-isoleucyl-tRNA(Ile) + AMP + diphosphate. Functionally, catalyzes the attachment of isoleucine to tRNA(Ile). As IleRS can inadvertently accommodate and process structurally similar amino acids such as valine, to avoid such errors it has two additional distinct tRNA(Ile)-dependent editing activities. One activity is designated as 'pretransfer' editing and involves the hydrolysis of activated Val-AMP. The other activity is designated 'posttransfer' editing and involves deacylation of mischarged Val-tRNA(Ile). The protein is Isoleucine--tRNA ligase of Lawsonia intracellularis (strain PHE/MN1-00).